The following is a 506-amino-acid chain: Cationic amino acid transporter 8 (506 aa).

Residues Asn-2 and Asn-5 are each glycosylated (N-linked (GlcNAc...) asparagine). Residues 38 to 58 (FYLLLIIIIYTATSACIYFDW) traverse the membrane as a helical segment. Asn-75 carries an N-linked (GlcNAc...) asparagine glycan. A run of 5 helical transmembrane segments spans residues 93-113 (NLYPMTLAIHFTMSVFCGFLY), 116-136 (IGPKFTAIIGQGFNILSWIFL), 147-167 (LIGFIFLGLGADTAFIPILTV), 174-194 (ISTFIMTVIGAAASLSYAVPA), and 211-231 (ICYGYIFIILIPCLLVATFLL). An N-linked (GlcNAc...) asparagine glycan is attached at Asn-277. A helical transmembrane segment spans residues 302-322 (ILLFFKVLLSYPSICIIVYFI). 2 N-linked (GlcNAc...) asparagine glycosylation sites follow: Asn-325 and Asn-342. 4 consecutive transmembrane segments (helical) span residues 344–364 (SIINIINILMPISFIPCIIFG), 372–392 (AAIIIIIMNAFSALMHLTALI), 399–419 (LISAFLYMCAASIYTSQIYCF), and 427–447 (VVFGKLLGITSLFGGMFSLFC). 2 N-linked (GlcNAc...) asparagine glycosylation sites follow: Asn-453 and Asn-456. The chain crosses the membrane as a helical span at residues 466–486 (TISILLAISFIIMFLPLSILY).

It belongs to the SLC43A transporter (TC 2.A.1.44) family.

The protein localises to the cell membrane. Functionally, cationic amino acid transporter which transports L-arginine, L-lysine and, to a lesser extent, L-histidine and ornithine. Plays an essential role in gametogenesis. This is Cationic amino acid transporter 8 from Plasmodium berghei (strain Anka).